We begin with the raw amino-acid sequence, 490 residues long: MSSKISPHVRVRFAPSPTGYLHVGGARTALYNYLFAKKNGGEFILRIEDTDEARSTQESLRGVVDDLVWLGLKWDEGVDPVTLKDVGPNGPYRQSERLHIYKEIADQLLKEGKAYYCFMTEEDIEKQKAAAGSFAHLVSPYQDWTLDQALERLKTGDKAVVRFKTKNLVKDYIFTDLVRGEVKFPSDMVGDFVLLRSDGMPVYNFCCVVDDHLMKMTHVFRAEEHLPNTLRQLMIYEAMNWPTPEFGHMALILDEDRQKLSKRKGAVACGQLKDEGYLASAVLNFIALLGWSDPQGREILSVKDMLEVFDISRLNPSGAIFDRVKFKWMNAQHLRALPNAELWQAVAPFLARENMDLPTDPAWQSKSLDLFKPYMEILADAIELYRPLNDKSYVILPEADETLKWESTKAVLTSWKNLLQAHPSDYMTEEEFLKMQDEVKNQTGSKGKHLFMPIRVAVIGKPHGAELKTLVPLMKKSSLVARAEQALAKV.

The short motif at 15–25 is the 'HIGH' region element; the sequence is PSPTGYLHVGG. The 'KMSKS' region motif lies at 259–263; sequence KLSKR. K262 contacts ATP.

It belongs to the class-I aminoacyl-tRNA synthetase family. Glutamate--tRNA ligase type 1 subfamily. As to quaternary structure, monomer.

Its subcellular location is the cytoplasm. It carries out the reaction tRNA(Glu) + L-glutamate + ATP = L-glutamyl-tRNA(Glu) + AMP + diphosphate. Catalyzes the attachment of glutamate to tRNA(Glu) in a two-step reaction: glutamate is first activated by ATP to form Glu-AMP and then transferred to the acceptor end of tRNA(Glu). The sequence is that of Glutamate--tRNA ligase from Bdellovibrio bacteriovorus (strain ATCC 15356 / DSM 50701 / NCIMB 9529 / HD100).